Here is a 765-residue protein sequence, read N- to C-terminus: Mitochondrial 15S rRNA processing factor CCM1 (765 aa).

The N-terminal 63 residues, M1–T63, are a transit peptide targeting the mitochondrion. 2 disordered regions span residues L26 to S67 and L92 to P114. Residues S42–D56 are compositionally biased toward basic and acidic residues. 5 PPR repeats span residues K274–I308, S309–T344, D347–V381, N382–P417, and N418–T452. Residues P585–I609 form a disordered region. Positions E592–I609 are enriched in polar residues. The PPR 6 repeat unit spans residues D631–F661.

Belongs to the CCM1 family. As to quaternary structure, binds to mitochondrial small subunit 15S rRNA.

The protein resides in the mitochondrion. Regulates mitochondrial small subunit maturation by controlling 15S rRNA 5'-end processing. Localizes to the 5' precursor of the 15S rRNA in a position that is subsequently occupied by mS47 in the mature yeast mtSSU. Uses structure and sequence-specific RNA recognition, binding to a single-stranded region of the precursor and specifically recognizing bases -6 to -1. The exchange of Ccm1 for mS47 is coupled to the irreversible removal of precursor rRNA that is accompanied by conformational changes of the mitoribosomal proteins uS5m and mS26. These conformational changes signal completion of 5'-end rRNA processing through protection of the mature 5'-end of the 15S rRNA and stabilization of mS47. The removal of the 5' precursor together with the dissociation of Ccm1 may be catalyzed by the 5'-3' exoribonuclease Pet127. Involved in the specific removal of group I introns in mitochondrial encoded transcripts. In Candida dubliniensis (strain CD36 / ATCC MYA-646 / CBS 7987 / NCPF 3949 / NRRL Y-17841) (Yeast), this protein is Mitochondrial 15S rRNA processing factor CCM1 (CCM1).